We begin with the raw amino-acid sequence, 611 residues long: Protein Pixie (611 aa).

2 consecutive 4Fe-4S ferredoxin-type domains span residues 15-45 and 54-83; these read RIAIVSDDKCKPKRCRQECKKTCPVVRMGKL and KIASLSEELCIGCGICVKKCPFEAITIINL. ABC transporter domains are found at residues 78-323 and 350-570; these read ITII…FLDG and IKRM…LELL. Residues 118–125 and 387–394 each bind ATP; these read GQNGIGKS and GENGTGKT.

The protein belongs to the ABC transporter superfamily. ABCE family. As to quaternary structure, interacts with components of eIF3 complex, namely eIF3a, eIF3j, eIF3b, eIF3c and eIF3i. Associates with the 40S ribosome subunit in an ATP-dependent manner and independently from the presence of the eIF3 complex. Forms a complex with Git and Pak; the interaction with Pak may be mediated by pix/dPIX. Post-translationally, ubiquitinated by Cnot4. Ubiquitination mediates the recruitment of autophagy receptors to the mitochondrial outer membrane and initiates mitophagy. Expressed in early and late larval imaginal disks (at protein level).

Its subcellular location is the cytoplasm. Plays a role in translation initiation and quality control of translation. Together with pelo and HBS1, is required for 48S complex formation from 80S ribosomes and dissociation of vacant 80S ribosomes. Stabilizes core components of eIF3 complex promoting their assembly into translation initiation-competent complexes. Together with pelo and HBS1, recognizes stalled ribosomes and promotes dissociation of elongation complexes assembled on non-stop mRNAs; this triggers endonucleolytic cleavage of the mRNA, a mechanism to release non-functional ribosomes and to degrade damaged mRNAs as part of the No-Go Decay (NGD) pathway. Plays a role in the regulation of mRNA turnover. Plays a role in quality control of translation of mitochondrial outer membrane-localized mRNA. As part of the Pink1-regulated signaling, ubiquitinated by Cnot4 upon mitochondria damage; this modification generates polyubiquitin signals that recruits autophagy receptors to the mitochondrial outer membrane to initiate mitophagy. Required in the wing disk for cell division and growth as well as cell survival. During muscle embryogenesis, required for the recruitment of Pak to muscle attachments in the embryo, hence may play a role in proper muscle morphogenesis and proper guidance and targeting of subsets of myotubes. This Drosophila melanogaster (Fruit fly) protein is Protein Pixie.